The primary structure comprises 58 residues: MNKLKITQIKSSIGCLKKHKSTLYGLGLRHIGHTVIRQNSPRLLGMINSISYLVKIKD.

It belongs to the universal ribosomal protein uL30 family. As to quaternary structure, part of the 50S ribosomal subunit.

This is Large ribosomal subunit protein uL30 from Wigglesworthia glossinidia brevipalpis.